The primary structure comprises 270 residues: UPF0354 protein BcerKBAB4_4524 (270 aa).

The protein belongs to the UPF0354 family.

The sequence is that of UPF0354 protein BcerKBAB4_4524 from Bacillus mycoides (strain KBAB4) (Bacillus weihenstephanensis).